The primary structure comprises 86 residues: Mitochondrial import inner membrane translocase subunit Tim10 (86 aa).

The short motif at 29–54 is the Twin CX3C motif element; it reads CQAKCIATAFKESELTKGEAVCLDRC. 2 disulfide bridges follow: cysteine 29-cysteine 54 and cysteine 33-cysteine 50.

It belongs to the small Tim family. As to quaternary structure, heterohexamer; composed of 3 copies of tim-9/tin-9.1 and 3 copies of tim-10/tin-10, named soluble 70 kDa complex. The complex associates with the tim-22 component of the TIM22 complex. Interacts with multi-pass transmembrane proteins in transit.

It localises to the mitochondrion inner membrane. Mitochondrial intermembrane chaperone that participates in the import and insertion of multi-pass transmembrane proteins into the mitochondrial inner membrane. May also be required for the transfer of beta-barrel precursors from the TOM complex to the sorting and assembly machinery (SAM complex) of the outer membrane. Acts as a chaperone-like protein that protects the hydrophobic precursors from aggregation and guide them through the mitochondrial intermembrane space. The chain is Mitochondrial import inner membrane translocase subunit Tim10 (tin-10) from Caenorhabditis briggsae.